A 100-amino-acid polypeptide reads, in one-letter code: UPF0213 protein YhbQ (100 aa).

The region spanning 2-77 is the GIY-YIG domain; the sequence is TPWYLYLIRT…KQLTKRQKER (76 aa).

The protein belongs to the UPF0213 family.

The polypeptide is UPF0213 protein YhbQ (Salmonella arizonae (strain ATCC BAA-731 / CDC346-86 / RSK2980)).